We begin with the raw amino-acid sequence, 174 residues long: Interleukin-1 receptor antagonist protein (174 aa).

The N-terminal stretch at 1 to 23 (MDIYIHGYLICLLLFLFRSETAC) is a signal peptide. C89 and C139 are oxidised to a cystine. The N-linked (GlcNAc...) asparagine glycan is linked to N107.

Belongs to the IL-1 family.

The protein resides in the secreted. Anti-inflammatory antagonist of interleukin-1 family of proinflammatory cytokines such as interleukin-1beta/IL1B and interleukin-1alpha/IL1A. Protects from immune dysregulation and uncontrolled systemic inflammation triggered by IL1 for a range of innate stimulatory agents such as pathogens. This Bos taurus (Bovine) protein is Interleukin-1 receptor antagonist protein (IL1RN).